The following is a 784-amino-acid chain: DNA ligase (784 aa).

Residues 31 to 35 (DAEYD), 80 to 81 (SL), and glutamate 120 each bind NAD(+). The N6-AMP-lysine intermediate role is filled by lysine 122. The NAD(+) site is built by arginine 143, glutamate 180, lysine 296, and lysine 320. Cysteine 414, cysteine 417, cysteine 444, and cysteine 450 together coordinate Zn(2+). The 84-residue stretch at 701-784 (AEGLPLAGQT…AFMAEQGITL (84 aa)) folds into the BRCT domain.

This sequence belongs to the NAD-dependent DNA ligase family. LigA subfamily. Requires Mg(2+) as cofactor. Mn(2+) serves as cofactor.

The enzyme catalyses NAD(+) + (deoxyribonucleotide)n-3'-hydroxyl + 5'-phospho-(deoxyribonucleotide)m = (deoxyribonucleotide)n+m + AMP + beta-nicotinamide D-nucleotide.. In terms of biological role, DNA ligase that catalyzes the formation of phosphodiester linkages between 5'-phosphoryl and 3'-hydroxyl groups in double-stranded DNA using NAD as a coenzyme and as the energy source for the reaction. It is essential for DNA replication and repair of damaged DNA. The protein is DNA ligase of Pseudomonas entomophila (strain L48).